The chain runs to 247 residues: Ribonuclease PH (247 aa).

Residues Arg87 and 125 to 127 each bind phosphate; that span reads GTR.

The protein belongs to the RNase PH family. Homohexameric ring arranged as a trimer of dimers.

It catalyses the reaction tRNA(n+1) + phosphate = tRNA(n) + a ribonucleoside 5'-diphosphate. Its function is as follows. Phosphorolytic 3'-5' exoribonuclease that plays an important role in tRNA 3'-end maturation. Removes nucleotide residues following the 3'-CCA terminus of tRNAs; can also add nucleotides to the ends of RNA molecules by using nucleoside diphosphates as substrates, but this may not be physiologically important. Probably plays a role in initiation of 16S rRNA degradation (leading to ribosome degradation) during starvation. This chain is Ribonuclease PH, found in Trichormus variabilis (strain ATCC 29413 / PCC 7937) (Anabaena variabilis).